The following is a 293-amino-acid chain: 4-hydroxybenzoate octaprenyltransferase (293 aa).

A run of 8 helical transmembrane segments spans residues 41-61, 98-118, 122-142, 145-165, 167-187, 218-238, 241-261, and 272-292; these read FAAAGGMPPLSVLVIFVLGVI, TEAKILFVLLLCIAFVLDLLL, TFLLSFVAVALAIIYPFMKRF, LPQVVLGMAFGWAIPMAYGAV, ESLPLECWLLFFANIFWTVAY, IIALLQFITLVLLVIFGWISQ, WGYFVVLGLSASLFSHQCWLT, and AFLNNHYFGLGVFFAILVGIY.

Belongs to the UbiA prenyltransferase family. Mg(2+) is required as a cofactor.

It localises to the cell inner membrane. The catalysed reaction is all-trans-octaprenyl diphosphate + 4-hydroxybenzoate = 4-hydroxy-3-(all-trans-octaprenyl)benzoate + diphosphate. Its pathway is cofactor biosynthesis; ubiquinone biosynthesis. In terms of biological role, catalyzes the prenylation of para-hydroxybenzoate (PHB) with an all-trans polyprenyl group. Mediates the second step in the final reaction sequence of ubiquinone-8 (UQ-8) biosynthesis, which is the condensation of the polyisoprenoid side chain with PHB, generating the first membrane-bound Q intermediate 3-octaprenyl-4-hydroxybenzoate. This is 4-hydroxybenzoate octaprenyltransferase from Actinobacillus pleuropneumoniae serotype 5b (strain L20).